A 451-amino-acid chain; its full sequence is Glycylpeptide N-tetradecanoyltransferase (451 aa).

Residues 34-37 (YKFW), 167-169 (LCV), and 175-179 (SKRLT) each bind tetradecanoyl-CoA. Leucine 451 serves as the catalytic Proton acceptor; via carboxylate.

Belongs to the NMT family. In terms of assembly, monomer.

It localises to the cytoplasm. The catalysed reaction is N-terminal glycyl-[protein] + tetradecanoyl-CoA = N-tetradecanoylglycyl-[protein] + CoA + H(+). Adds a myristoyl group to the N-terminal glycine residue of certain cellular proteins. The protein is Glycylpeptide N-tetradecanoyltransferase (NMT1) of Candida glabrata (strain ATCC 2001 / BCRC 20586 / JCM 3761 / NBRC 0622 / NRRL Y-65 / CBS 138) (Yeast).